Consider the following 297-residue polypeptide: UBX domain-containing protein 1 (297 aa).

Alanine 2 is modified (N-acetylalanine). A UBA domain is found at 2-42 (AELTALESLIEMGFPRGRAEKALALTGNQGIEAAMDWLMEH). The disordered stretch occupies residues 38-214 (WLMEHEDDPD…PPTKREYDQC (177 aa)). Positions 42–52 (HEDDPDVDEPL) are enriched in acidic residues. An interaction with BRCA1 region spans residues 43-297 (EDDPDVDEPL…VLIVAKKCPS (255 aa)). Basic and acidic residues-rich tracts occupy residues 86 to 122 (LTEE…EREK) and 137 to 177 (KLQE…ERAK). Serine 199 bears the Phosphoserine mark. Serine 200 carries the phosphoserine; by MAPK12 modification. Phosphothreonine is present on residues threonine 207 and threonine 229. The 83-residue stretch at 209–291 (REYDQCRIQV…GLVPSAVLIV (83 aa)) folds into the UBX domain. Position 270 is a phosphoserine (serine 270).

In terms of assembly, interacts with MAVS; this interaction prevents MAVS oligomerization and thus disrupts the RLR signaling pathway. Interacts with CUL1; this interaction inhibits CUL1-mediated degradation of NF-kappa-B inhibitors. Interacts with BIRC2/c-IAP1; this interaction prevents TNFalpha-stimulated RIP1 ubiquitination and subsequent NF-kappa-B activation. Component of a complex required to couple retrotranslocation, ubiquitination and deglycosylation composed of NGLY1, SAKS1, AMFR, VCP and RAD23B. Interacts with HOMER2. Interacts directly with VCP. Interacts with BRCA1 and BARD1; interaction takes place when BRCA1 is not autoubiquitinated but is strongly enhanced in the presence of autoubiquitinated BRCA1.

It is found in the cytoplasm. Functionally, ubiquitin-binding protein that plays a role in the modulation of innate immune response. Blocks both the RIG-I-like receptors (RLR) and NF-kappa-B pathways. Following viral infection, UBXN1 is induced and recruited to the RLR component MAVS. In turn, interferes with MAVS oligomerization, and disrupts the MAVS/TRAF3/TRAF6 signalosome. This function probably serves as a brake to prevent excessive RLR signaling. Interferes with the TNFalpha-triggered NF-kappa-B pathway by interacting with cellular inhibitors of apoptosis proteins (cIAPs) and thereby inhibiting their recruitment to TNFR1. Also prevents the activation of NF-kappa-B by associating with CUL1 and thus inhibiting NF-kappa-B inhibitor alpha/NFKBIA degradation that remains bound to NF-kappa-B. Interacts with the BRCA1-BARD1 heterodimer and regulates its activity. Specifically binds 'Lys-6'-linked polyubiquitin chains. Interaction with autoubiquitinated BRCA1 leads to the inhibition of the E3 ubiquitin-protein ligase activity of the BRCA1-BARD1 heterodimer. Component of a complex required to couple deglycosylation and proteasome-mediated degradation of misfolded proteins in the endoplasmic reticulum that are retrotranslocated in the cytosol. This Mus musculus (Mouse) protein is UBX domain-containing protein 1 (Ubxn1).